We begin with the raw amino-acid sequence, 247 residues long: Type III pantothenate kinase (247 aa).

7 to 14 (AIGNSRWH) is a binding site for ATP. Substrate contacts are provided by residues Tyr91 and 95–98 (GLDR). Asp97 (proton acceptor) is an active-site residue. Asp117 contributes to the K(+) binding site. Residue Thr120 coordinates ATP.

Belongs to the type III pantothenate kinase family. In terms of assembly, homodimer. The cofactor is NH4(+). K(+) is required as a cofactor.

It is found in the cytoplasm. It carries out the reaction (R)-pantothenate + ATP = (R)-4'-phosphopantothenate + ADP + H(+). It functions in the pathway cofactor biosynthesis; coenzyme A biosynthesis; CoA from (R)-pantothenate: step 1/5. In terms of biological role, catalyzes the phosphorylation of pantothenate (Pan), the first step in CoA biosynthesis. In Synechococcus sp. (strain ATCC 27144 / PCC 6301 / SAUG 1402/1) (Anacystis nidulans), this protein is Type III pantothenate kinase.